Here is a 378-residue protein sequence, read N- to C-terminus: Flap endonuclease 1 (378 aa).

The interval M1–R105 is N-domain. D34 is a binding site for Mg(2+). 2 residues coordinate DNA: R47 and R71. Residues D87, E156, E158, D177, and D179 each contribute to the Mg(2+) site. The interval E120–H251 is I-domain. E156 is a DNA binding site. The DNA site is built by G229 and D231. D231 contributes to the Mg(2+) binding site. The tract at residues V337–F345 is interaction with PCNA. The segment covering A356–K367 has biased composition (low complexity). Residues A356–R378 are disordered. Basic residues predominate over residues T368–R378.

This sequence belongs to the XPG/RAD2 endonuclease family. FEN1 subfamily. Interacts with PCNA. Three molecules of FEN1 bind to one PCNA trimer with each molecule binding to one PCNA monomer. PCNA stimulates the nuclease activity without altering cleavage specificity. Requires Mg(2+) as cofactor. Post-translationally, phosphorylated. Phosphorylation upon DNA damage induces relocalization to the nuclear plasma.

The protein localises to the nucleus. Its subcellular location is the nucleolus. The protein resides in the nucleoplasm. It is found in the mitochondrion. Its function is as follows. Structure-specific nuclease with 5'-flap endonuclease and 5'-3' exonuclease activities involved in DNA replication and repair. During DNA replication, cleaves the 5'-overhanging flap structure that is generated by displacement synthesis when DNA polymerase encounters the 5'-end of a downstream Okazaki fragment. It enters the flap from the 5'-end and then tracks to cleave the flap base, leaving a nick for ligation. Also involved in the long patch base excision repair (LP-BER) pathway, by cleaving within the apurinic/apyrimidinic (AP) site-terminated flap. Acts as a genome stabilization factor that prevents flaps from equilibrating into structures that lead to duplications and deletions. Also possesses 5'-3' exonuclease activity on nicked or gapped double-stranded DNA, and exhibits RNase H activity. Also involved in replication and repair of rDNA and in repairing mitochondrial DNA. This Eremothecium gossypii (strain ATCC 10895 / CBS 109.51 / FGSC 9923 / NRRL Y-1056) (Yeast) protein is Flap endonuclease 1.